A 442-amino-acid polypeptide reads, in one-letter code: Inhibitor of Apoptosis OPG037 (442 aa).

6 ANK repeats span residues 67 to 96 (DGNY…DPNA), 100 to 131 (HNKT…KINN), 203 to 233 (DGNT…DVNK), 237 to 267 (FGDS…VITD), 292 to 321 (YDST…ICED), and 323 to 347 (MYYA…SVDS).

Belongs to the orthopoxvirus OPG037 family. May interact with host caspase-9-Apaf-1 complex.

It is found in the host cytoplasm. Its function is as follows. Inhibits host apoptosis. Acts by associating with host apoptosome. In Monkeypox virus, this protein is Inhibitor of Apoptosis OPG037 (OPG037).